We begin with the raw amino-acid sequence, 255 residues long: Hemin import ATP-binding protein HmuV (255 aa).

The ABC transporter domain occupies 2–238 (LRVENLHVRR…EPLKAVFGLE (237 aa)). 34–41 (GPNGAGKS) provides a ligand contact to ATP.

It belongs to the ABC transporter superfamily. Heme (hemin) importer (TC 3.A.1.14.5) family. The complex is composed of two ATP-binding proteins (HmuV), two transmembrane proteins (HmuU) and a solute-binding protein (HmuT).

It is found in the cell inner membrane. Its function is as follows. Part of the ABC transporter complex HmuTUV involved in hemin import. Responsible for energy coupling to the transport system. This chain is Hemin import ATP-binding protein HmuV, found in Pseudomonas fluorescens (strain ATCC BAA-477 / NRRL B-23932 / Pf-5).